Reading from the N-terminus, the 494-residue chain is Protein DETOXIFICATION 23 (494 aa).

Residues M1–D25 are disordered. 12 helical membrane-spanning segments follow: residues L40 to I60, A74 to M94, I123 to L143, I158 to M178, I188 to V208, L223 to T243, G268 to L288, A297 to A317, M340 to L360, L384 to G404, L416 to L436, and V441 to M461.

It belongs to the multi antimicrobial extrusion (MATE) (TC 2.A.66.1) family.

Its subcellular location is the membrane. The sequence is that of Protein DETOXIFICATION 23 from Arabidopsis thaliana (Mouse-ear cress).